A 294-amino-acid chain; its full sequence is Acetylglutamate kinase (294 aa).

Residues 63-64 (GG), Arg85, and Asn188 each bind substrate.

It belongs to the acetylglutamate kinase family. ArgB subfamily.

The protein localises to the cytoplasm. The catalysed reaction is N-acetyl-L-glutamate + ATP = N-acetyl-L-glutamyl 5-phosphate + ADP. It functions in the pathway amino-acid biosynthesis; L-arginine biosynthesis; N(2)-acetyl-L-ornithine from L-glutamate: step 2/4. In terms of biological role, catalyzes the ATP-dependent phosphorylation of N-acetyl-L-glutamate. This chain is Acetylglutamate kinase, found in Methanococcus maripaludis (strain DSM 14266 / JCM 13030 / NBRC 101832 / S2 / LL).